The primary structure comprises 1222 residues: ATP-dependent helicase/nuclease subunit A (1222 aa).

The UvrD-like helicase ATP-binding domain occupies 39-495 (QKRTAQQIEA…ILLKENFRSQ (457 aa)). Residue 60-67 (ASAGSGKT) coordinates ATP. Residues 524–810 (QLIAGSHAQT…NLMTIHKSKG (287 aa)) form the UvrD-like helicase C-terminal domain.

The protein belongs to the helicase family. AddA subfamily. Heterodimer of AddA and AddB/RexB. It depends on Mg(2+) as a cofactor.

It catalyses the reaction Couples ATP hydrolysis with the unwinding of duplex DNA by translocating in the 3'-5' direction.. The catalysed reaction is ATP + H2O = ADP + phosphate + H(+). Its function is as follows. The heterodimer acts as both an ATP-dependent DNA helicase and an ATP-dependent, dual-direction single-stranded exonuclease. Recognizes the chi site generating a DNA molecule suitable for the initiation of homologous recombination. The AddA nuclease domain is required for chi fragment generation; this subunit has the helicase and 3' -&gt; 5' nuclease activities. This is ATP-dependent helicase/nuclease subunit A from Streptococcus pyogenes serotype M3 (strain ATCC BAA-595 / MGAS315).